The chain runs to 145 residues: Large ribosomal subunit protein bL17 (145 aa).

The protein belongs to the bacterial ribosomal protein bL17 family. As to quaternary structure, part of the 50S ribosomal subunit. Contacts protein L32.

The protein is Large ribosomal subunit protein bL17 of Orientia tsutsugamushi (strain Ikeda) (Rickettsia tsutsugamushi).